The chain runs to 172 residues: Translocon-associated protein subunit delta (172 aa).

The first 24 residues, 1–24 (MAALASLGALALLLLSGLSCCSEA), serve as a signal peptide directing secretion. An intrachain disulfide couples Cys-25 to Cys-56. The Lumenal portion of the chain corresponds to 25–143 (CVEPQITPSY…SVDHRGTWNG (119 aa)). Residue Lys-72 forms a Glycyl lysine isopeptide (Lys-Gly) (interchain with G-Cter in ubiquitin) linkage. The helical transmembrane segment at 144-164 (PWVSTEVLAAAIGLVIYYLAF) threads the bilayer. Residues 165 to 172 (SAKSHIQA) are Cytoplasmic-facing.

This sequence belongs to the TRAP-delta family. Heterotetramer of TRAP-alpha, TRAP-beta, TRAP-delta and TRAP-gamma.

It is found in the endoplasmic reticulum membrane. In terms of biological role, TRAP proteins are part of a complex whose function is to bind calcium to the ER membrane and thereby regulate the retention of ER resident proteins. In Bos taurus (Bovine), this protein is Translocon-associated protein subunit delta (SSR4).